The primary structure comprises 278 residues: Pantothenate synthetase (278 aa).

Position 26–33 (26–33 (MGNLHEGH)) interacts with ATP. The active-site Proton donor is H33. Q57 contributes to the (R)-pantoate binding site. Q57 contributes to the beta-alanine binding site. Residue 144 to 147 (GKKD) participates in ATP binding. Position 150 (Q150) interacts with (R)-pantoate. ATP contacts are provided by residues G173 and 181 to 184 (LSSR).

The protein belongs to the pantothenate synthetase family. In terms of assembly, homodimer.

It is found in the cytoplasm. It carries out the reaction (R)-pantoate + beta-alanine + ATP = (R)-pantothenate + AMP + diphosphate + H(+). Its pathway is cofactor biosynthesis; (R)-pantothenate biosynthesis; (R)-pantothenate from (R)-pantoate and beta-alanine: step 1/1. In terms of biological role, catalyzes the condensation of pantoate with beta-alanine in an ATP-dependent reaction via a pantoyl-adenylate intermediate. This chain is Pantothenate synthetase, found in Neisseria meningitidis serogroup B (strain ATCC BAA-335 / MC58).